The following is a 122-amino-acid chain: Large ribosomal subunit protein uL14 (122 aa).

It belongs to the universal ribosomal protein uL14 family. As to quaternary structure, part of the 50S ribosomal subunit. Forms a cluster with proteins L3 and L19. In the 70S ribosome, L14 and L19 interact and together make contacts with the 16S rRNA in bridges B5 and B8.

In terms of biological role, binds to 23S rRNA. Forms part of two intersubunit bridges in the 70S ribosome. The chain is Large ribosomal subunit protein uL14 from Sulfurihydrogenibium sp. (strain YO3AOP1).